The following is a 588-amino-acid chain: Mitochondrial tRNA methylthiotransferase CDK5RAP1 (588 aa).

A mitochondrion-targeting transit peptide spans 1-30; it reads MHPLRCVLQVQRLSAPFTSMCWVLLRTCRA. Disordered regions lie at residues 33–53 and 70–91; these read SVSS…QKDF and ASVP…YLSG. In terms of domain architecture, MTTase N-terminal spans 99–219; that stretch reads RKVYLETYGC…LPRLLAVVES (121 aa). Positions 108, 144, 182, 257, 261, and 264 each coordinate [4Fe-4S] cluster. The Radical SAM core domain maps to 243 to 498; that stretch reads SPSATSAFVS…TVFREEASKA (256 aa). In terms of domain architecture, TRAM spans 500-575; the sequence is KTSVGCSQLV…SQTLKGHILC (76 aa).

This sequence belongs to the methylthiotransferase family. MiaB subfamily. As to quaternary structure, interacts with CDK5R1 (p35 form). CDK5RAP1, CDK5RAP2 and CDK5RAP3 show competitive binding to CDK5R1. Probably forms a complex with CDK5R1 and CDK5. It depends on [4Fe-4S] cluster as a cofactor. As to expression, expressed in brain, liver, skeletal muscle and heart.

It is found in the mitochondrion. It catalyses the reaction N(6)-dimethylallyladenosine(37) in tRNA + (sulfur carrier)-SH + AH2 + 2 S-adenosyl-L-methionine = 2-methylsulfanyl-N(6)-dimethylallyladenosine(37) in tRNA + (sulfur carrier)-H + 5'-deoxyadenosine + L-methionine + A + S-adenosyl-L-homocysteine + 2 H(+). Methylthiotransferase that catalyzes the conversion of N6-(dimethylallyl)adenosine (i(6)A) to 2-methylthio-N6-(dimethylallyl)adenosine (ms(2)i(6)A) at position 37 (adjacent to the 3'-end of the anticodon) of four mitochondrial DNA-encoded tRNAs (Ser(UCN), Phe, Tyr and Trp). Essential for efficient and highly accurate protein translation by the ribosome. Specifically inhibits CDK5 activation by CDK5R1. Essential for efficient mitochondrial protein synthesis and respiratory chain. This Mus musculus (Mouse) protein is Mitochondrial tRNA methylthiotransferase CDK5RAP1.